Consider the following 336-residue polypeptide: Mitochondrial import receptor subunit TOM40 homolog (336 aa).

The segment at 1–58 (MGNVLAASSPAPPAAGSPPAPGLVSVPPGFTMPPVAGLTPTPDKKETQEDRLPNPGTF) is disordered. A compositionally biased stretch (pro residues) spans 10–21 (PAPPAAGSPPAP). A compositionally biased stretch (basic and acidic residues) spans 42–52 (PDKKETQEDRL).

Belongs to the Tom40 family. In terms of assembly, forms part of the preprotein translocase complex of the outer mitochondrial membrane (TOM complex). Interacts with mitochondrial targeting sequences.

It is found in the mitochondrion outer membrane. Functionally, channel-forming protein essential for import of protein precursors into mitochondria. This chain is Mitochondrial import receptor subunit TOM40 homolog (tomm40), found in Xenopus tropicalis (Western clawed frog).